Consider the following 424-residue polypeptide: Ubiquitin carboxyl-terminal hydrolase 12/46 homolog (424 aa).

The USP domain maps to 24 to 421 (FGLVNFGNTC…TGYILFYQSR (398 aa)). Catalysis depends on cysteine 33, which acts as the Nucleophile. A disordered region spans residues 131–189 (NAGPSNGNPKATNQGGSTSAMASSIASKSSSTSNSNSNSNSTTNSNGNSSNSTGSLNAN). A compositionally biased stretch (polar residues) spans 133–144 (GPSNGNPKATNQ). Residues 145-189 (GGSTSAMASSIASKSSSTSNSNSNSNSTTNSNGNSSNSTGSLNAN) show a composition bias toward low complexity. The active-site Proton acceptor is the histidine 369.

This sequence belongs to the peptidase C19 family. Catalytic component of the Usp12-46 deubiquitylase complex consisting of Usp12-46, Wdr20 and Uaf1. The Usp12-46 deubiquitylase complex associates with arr/arrow; the interaction leads to deubiquitination and stabilization of arr/arrow.

The enzyme catalyses Thiol-dependent hydrolysis of ester, thioester, amide, peptide and isopeptide bonds formed by the C-terminal Gly of ubiquitin (a 76-residue protein attached to proteins as an intracellular targeting signal).. Functionally, catalytic component of the Usp12-46 deubiquitylase complex. Deubiquitylates the wg/wingless-signaling receptor arr/arrow, which stabilizes the receptor and increases its concentration at the cell surface; this enhances the sensitivity of cells to wg/wingless-signal stimulation. This increases the amplitude and spatial range of the signaling response to the wg/wingless morphogen gradient, facilitating the precise, concentration-dependent regulation of its target genes. Required for wg/wingless-mediated signaling in the wing imaginal disc and for wg/wingless-dependent regulation of adult intestinal stem cell proliferation. Negative regulator of Notch signaling, possibly by regulating lysosomal degradation of N/Notch and affecting cell surface receptor levels; this may be context and cell-type specific function involved in external sensory organ development but not in wing imaginal-disc dorsoventral boundary signaling. Protects against HTT/huntingtin-induced polyglutamine expansion-dependent neurodegeneration. In Drosophila melanogaster (Fruit fly), this protein is Ubiquitin carboxyl-terminal hydrolase 12/46 homolog.